A 155-amino-acid polypeptide reads, in one-letter code: MPAADTCVRNARLADASAISRITEGYAGEGIMLKRSVENIIEHIRDFFVADYKGQVIGCCAIAFYTVKLAEIRSLAVLEEFRNKGIGRLLVEKAEAVLSEEGVNEVFVLTLNSGFFKRMGYKEIEKEYFPQKIWRDCTNCPKRMACDEIAMVKTL.

The N-acetyltransferase domain maps to 6 to 155 (TCVRNARLAD…CDEIAMVKTL (150 aa)).

Belongs to the acetyltransferase family.

This is an uncharacterized protein from Chlorobaculum tepidum (strain ATCC 49652 / DSM 12025 / NBRC 103806 / TLS) (Chlorobium tepidum).